Consider the following 421-residue polypeptide: Glycosaminoglycan xylosylkinase homolog (421 aa).

An N-terminal signal peptide occupies residues 1–21; that stretch reads MNKRSVIIAGIVASLLGLALG. N83 carries N-linked (GlcNAc...) asparagine glycosylation. Positions 131 and 147 each coordinate ATP. D166 is a binding site for Mn(2+). 2 disulfides stabilise this stretch: C225-C240 and C230-C233. 252-255 lines the ATP pocket; sequence IYIV. 2 cysteine pairs are disulfide-bonded: C285/C351 and C352/C409. The active site involves D314. The ATP site is built by E319 and D329. D329 contributes to the Mn(2+) binding site.

The protein belongs to the FAM20 family. It depends on Mn(2+) as a cofactor.

Its subcellular location is the golgi apparatus. The protein resides in the endoplasmic reticulum. It catalyses the reaction 3-O-(beta-D-galactosyl-(1-&gt;3)-beta-D-galactosyl-(1-&gt;4)-beta-D-xylosyl)-L-seryl-[protein] + ATP = 3-O-(beta-D-galactosyl-(1-&gt;3)-beta-D-galactosyl-(1-&gt;4)-beta-D-2-O-phosphoxylosyl)-L-seryl-[protein] + ADP + H(+). In terms of biological role, kylose kinase that mediates the 2-O-phosphorylation of xylose in the glycosaminoglycan-protein linkage region of proteoglycans. In Drosophila melanogaster (Fruit fly), this protein is Glycosaminoglycan xylosylkinase homolog.